The primary structure comprises 257 residues: Hydroxyacylglutathione hydrolase (257 aa).

Zn(2+)-binding residues include His-54, His-56, Asp-58, His-59, His-113, Asp-137, and His-175.

This sequence belongs to the metallo-beta-lactamase superfamily. Glyoxalase II family. As to quaternary structure, monomer. Zn(2+) is required as a cofactor.

The enzyme catalyses an S-(2-hydroxyacyl)glutathione + H2O = a 2-hydroxy carboxylate + glutathione + H(+). It functions in the pathway secondary metabolite metabolism; methylglyoxal degradation; (R)-lactate from methylglyoxal: step 2/2. In terms of biological role, thiolesterase that catalyzes the hydrolysis of S-D-lactoyl-glutathione to form glutathione and D-lactic acid. In Nostoc sp. (strain PCC 7120 / SAG 25.82 / UTEX 2576), this protein is Hydroxyacylglutathione hydrolase.